We begin with the raw amino-acid sequence, 326 residues long: Flap endonuclease 1 (326 aa).

The N-domain stretch occupies residues 1 to 100; sequence MGNAALRQLA…EEVQERRVAR (100 aa). Residues D28, D82, E154, E156, D175, D177, and D225 each contribute to the Mg(2+) site. An I-domain region spans residues 118–246; sequence AASRLEARTQ…TAISAINDHG (129 aa). Residues 318 to 326 are interaction with PCNA; that stretch reads VQTGLDEWI.

It belongs to the XPG/RAD2 endonuclease family. FEN1 subfamily. As to quaternary structure, interacts with PCNA. PCNA stimulates the nuclease activity without altering cleavage specificity. Requires Mg(2+) as cofactor.

In terms of biological role, structure-specific nuclease with 5'-flap endonuclease and 5'-3' exonuclease activities involved in DNA replication and repair. During DNA replication, cleaves the 5'-overhanging flap structure that is generated by displacement synthesis when DNA polymerase encounters the 5'-end of a downstream Okazaki fragment. Binds the unpaired 3'-DNA end and kinks the DNA to facilitate 5' cleavage specificity. Cleaves one nucleotide into the double-stranded DNA from the junction in flap DNA, leaving a nick for ligation. Also involved in the base excision repair (BER) pathway. Acts as a genome stabilization factor that prevents flaps from equilibrating into structures that lead to duplications and deletions. Also possesses 5'-3' exonuclease activity on nicked or gapped double-stranded DNA. The polypeptide is Flap endonuclease 1 (Haloquadratum walsbyi (strain DSM 16790 / HBSQ001)).